Reading from the N-terminus, the 282-residue chain is tRNA uridine(34) hydroxylase (282 aa).

The 95-residue stretch at 128–222 (EGRPVVMLDT…YFEEVGGSHY (95 aa)) folds into the Rhodanese domain. Catalysis depends on Cys182, which acts as the Cysteine persulfide intermediate.

This sequence belongs to the TrhO family.

It carries out the reaction uridine(34) in tRNA + AH2 + O2 = 5-hydroxyuridine(34) in tRNA + A + H2O. Functionally, catalyzes oxygen-dependent 5-hydroxyuridine (ho5U) modification at position 34 in tRNAs. The sequence is that of tRNA uridine(34) hydroxylase from Cupriavidus taiwanensis (strain DSM 17343 / BCRC 17206 / CCUG 44338 / CIP 107171 / LMG 19424 / R1) (Ralstonia taiwanensis (strain LMG 19424)).